A 730-amino-acid polypeptide reads, in one-letter code: Denticleless protein homolog (730 aa).

Met1 is modified (N-acetylmethionine). WD repeat units lie at residues 47–89 (GVPV…FRKK), 96–135 (AHWNAVFDLAWVPGELKLVTAAGDQTAKFWDVKAGELIGT), and 138–178 (GHQC…KDGF). Residues 168–171 (WDTR) carry the DDB1-binding motif motif. Residues 188-198 (AHNTSDKQTPS) show a composition bias toward polar residues. The disordered stretch occupies residues 188–210 (AHNTSDKQTPSKPKKKQNSKGLA). Thr196 is modified (phosphothreonine). The short motif at 197–203 (PSKPKKK) is the Nuclear localization signal element. WD repeat units lie at residues 214 to 253 (DFQQSVTVVLFQDENTLVSAGAVDGIIKVWDLRKNYTAYR), 267 to 308 (SSTR…TSPV), 313 to 354 (GHQN…QPPT), and 358 to 398 (GHSQ…EEKP). Positions 243-246 (WDLR) match the DDB1-binding motif motif. The tract at residues 399-443 (GGDKLSTVGWASQKKKESRPGLVTVTSSQSTPAKAPRAKCNPSNS) is disordered. 2 positions are modified to phosphoserine: Ser410 and Ser426. Thr464 is modified (phosphothreonine; by CDK1 and CDK2). Positions 465 to 498 (PTFSIKTSPAKARSPINRRGSVSSVSPKPPSSFK) are disordered. Ser485, Ser490, Ser495, and Ser512 each carry phosphoserine. The residue at position 516 (Thr516) is a Phosphothreonine. Ser557 carries the phosphoserine modification. Disordered regions lie at residues 599 to 631 (SKDSLGPTKSSKIEGAGTSISEPPSPISPYASE) and 644 to 703 (GEGS…TITP). Phosphoserine is present on residues Ser676 and Ser679. Residues 679 to 689 (SPSSQTPNSRR) show a composition bias toward polar residues. Residues Thr684 and Thr702 each carry the phosphothreonine modification. Ser717 bears the Phosphoserine mark.

This sequence belongs to the WD repeat cdt2 family. Component of the DCX(DTL) E3 ubiquitin ligase complex (also called CRL4(CDT2)), at least composed of CUL4 (CUL4A or CUL4B), DDB1, DTL/CDT2 and RBX1. Interacts with CDKN1A. Interacts with DDB1. Interacts with FBXO11; SCF(FBXWO11) controls DTL stability but DCX(DTL) does not control FBXO11 stability. Interacts with CRY1. Ubiquitinated by the anaphase promoting complex/cyclosome (APC/C). Autoubiquitinated through 'Lys-48'-polyubiquitin chains in a PCNA-independent reaction, allowing proteasomal turnover. Polyubiquitinated by SCF(FBXO11) when not phosphorylated, leading to its degradation. A tight regulation of the polyubiquitination by SCF(FBXO11) is involved in the control of different processes such as TGF-beta signaling, cell cycle progression and exit. In terms of processing, phosphorylated at Thr-464 by CDK1/Cyclin-B and CDK2/Cyclin-A but not by CDK2/Cyclin-E, MAPK1 or PLK1. Phosphorylation at Thr-464 inhibits the interaction with FBXO11 and decreases upon cell cycle exit induced by TGF-beta or serum starvation. As to expression, expressed in placenta and testis, very low expression seen in skeletal muscle. Detected in all hematopoietic tissues examined, with highest expression in thymus and bone marrow. A low level detected in the spleen and lymph node, and barely detectable level in the peripheral leukocytes. RA treatment down-regulated the expression in NT2 cell.

It localises to the nucleus. It is found in the nucleus membrane. The protein resides in the cytoplasm. Its subcellular location is the cytoskeleton. The protein localises to the microtubule organizing center. It localises to the centrosome. It is found in the chromosome. Its pathway is protein modification; protein ubiquitination. Functionally, substrate-specific adapter of a DCX (DDB1-CUL4-X-box) E3 ubiquitin-protein ligase complex required for cell cycle control, DNA damage response and translesion DNA synthesis. The DCX(DTL) complex, also named CRL4(CDT2) complex, mediates the polyubiquitination and subsequent degradation of CDT1, CDKN1A/p21(CIP1), FBH1, KMT5A and SDE2. CDT1 degradation in response to DNA damage is necessary to ensure proper cell cycle regulation of DNA replication. CDKN1A/p21(CIP1) degradation during S phase or following UV irradiation is essential to control replication licensing. KMT5A degradation is also important for a proper regulation of mechanisms such as TGF-beta signaling, cell cycle progression, DNA repair and cell migration. Most substrates require their interaction with PCNA for their polyubiquitination: substrates interact with PCNA via their PIP-box, and those containing the 'K+4' motif in the PIP box, recruit the DCX(DTL) complex, leading to their degradation. In undamaged proliferating cells, the DCX(DTL) complex also promotes the 'Lys-164' monoubiquitination of PCNA, thereby being involved in PCNA-dependent translesion DNA synthesis. The DDB1-CUL4A-DTL E3 ligase complex regulates the circadian clock function by mediating the ubiquitination and degradation of CRY1. This chain is Denticleless protein homolog (DTL), found in Homo sapiens (Human).